We begin with the raw amino-acid sequence, 155 residues long: MLHKKYRPNVAAIIMSPDYPNACEVFIAERIDIEGAWQFPQGGIDEGETPLEALHRELLEEIGTNEIEILAQYPRWIAYDFPSNMEHKFYSFDGQKQRYFLVRLKHTNNIDLNKHTPEFRAYQFIHLKDLLKRIVPFKRQVYRQVIAYFKREGYL.

Residues 5-147 (KYRPNVAAII…KRQVYRQVIA (143 aa)) enclose the Nudix hydrolase domain. Residues 42-63 (GGIDEGETPLEALHRELLEEIG) carry the Nudix box motif.

The protein belongs to the Nudix hydrolase family. RppH subfamily. A divalent metal cation serves as cofactor.

Its function is as follows. Accelerates the degradation of transcripts by removing pyrophosphate from the 5'-end of triphosphorylated RNA, leading to a more labile monophosphorylated state that can stimulate subsequent ribonuclease cleavage. The sequence is that of RNA pyrophosphohydrolase from Helicobacter pylori (strain ATCC 700392 / 26695) (Campylobacter pylori).